The chain runs to 233 residues: Clathrin light chain (233 aa).

The tract at residues 1 to 124 is disordered; the sequence is MSEKFPPLED…EDRSEVVDQW (124 aa). A compositionally biased stretch (basic and acidic residues) spans 17–43; it reads PNDKKDDDTDFLKREAEILGDEFKTEQ. T49 is subject to Phosphothreonine. At S52 the chain carries Phosphoserine. Acidic residues predominate over residues 56-67; that stretch reads DDDEIRDFEEQF. Residues 69–92 show a composition bias toward polar residues; it reads DINSANGAVSSDQNGSATVSSGND. Residues 112 to 124 are compositionally biased toward basic and acidic residues; it reads SVKEDRSEVVDQW. A coiled-coil region spans residues 125 to 186; it reads KQRRAVEIHE…EAFLKKRDEF (62 aa). The interval 144–204 is involved in binding clathrin heavy chain; it reads KELQDEAIKH…DRALQLINQD (61 aa).

This sequence belongs to the clathrin light chain family. In terms of assembly, clathrin coats are formed from molecules containing 3 heavy chains and 3 light chains. Interacts with the auxilin-like clathrin uncoating factor SWA2.

Its subcellular location is the cytoplasmic vesicle membrane. It is found in the membrane. The protein resides in the coated pit. Functionally, clathrin is the major protein of the polyhedral coat of coated pits and vesicles. In yeast, it is involved in the retention of proteins in an intracellular membrane compartment, presumably the trans-Golgi. The yeast light chain is important for cell growth. The light chain may help to properly orient the assembly/ disassembly of the clathrin coats. This chain is Clathrin light chain (CLC1), found in Saccharomyces cerevisiae (strain ATCC 204508 / S288c) (Baker's yeast).